An 87-amino-acid chain; its full sequence is MRFILSLPVLAVVLAMVLEGPAPAQADPDISSSLESIPGKLKEFGSTVEEKFRTAIDQIKKSEFSEKTQNWFSELFHKVKEKFETTF.

A signal peptide spans 1-26 (MRFILSLPVLAVVLAMVLEGPAPAQA).

The protein belongs to the apolipoprotein C1 family.

It is found in the secreted. In terms of biological role, inhibitor of lipoprotein binding to the low density lipoprotein (LDL) receptor, LDL receptor-related protein, and very low density lipoprotein (VLDL) receptor. Associates with high density lipoproteins (HDL) and the triacylglycerol-rich lipoproteins in the plasma and makes up about 10% of the protein of the VLDL and 2% of that of HDL. Appears to interfere directly with fatty acid uptake and is also the major plasma inhibitor of cholesteryl ester transfer protein (CETP). Binds free fatty acids and reduces their intracellular esterification. Modulates the interaction of APOE with beta-migrating VLDL and inhibits binding of beta-VLDL to the LDL receptor-related protein. This Pteropus alecto (Black flying fox) protein is Apolipoprotein C-I (APOC1).